The chain runs to 590 residues: V-type ATP synthase alpha chain (590 aa).

Position 232–239 (232–239 (GPFGSGKT)) interacts with ATP.

It belongs to the ATPase alpha/beta chains family.

The catalysed reaction is ATP + H2O + 4 H(+)(in) = ADP + phosphate + 5 H(+)(out). Its function is as follows. Produces ATP from ADP in the presence of a proton gradient across the membrane. The V-type alpha chain is a catalytic subunit. The chain is V-type ATP synthase alpha chain from Thermoanaerobacter sp. (strain X514).